The sequence spans 136 residues: Succinate dehydrogenase assembly factor 3, mitochondrial (136 aa).

The transit peptide at 1 to 24 (MRASMVRRMAAAASSSASSSLRPA) directs the protein to the mitochondrion.

This sequence belongs to the complex I LYR family. SDHAF3 subfamily. As to quaternary structure, interacts with the iron-sulfur protein subunit within the SDH catalytic dimer.

It localises to the mitochondrion matrix. Plays an essential role in the assembly of succinate dehydrogenase (SDH), an enzyme complex (also referred to as respiratory complex II) that is a component of both the tricarboxylic acid (TCA) cycle and the mitochondrial electron transport chain, and which couples the oxidation of succinate to fumarate with the reduction of ubiquinone (coenzyme Q) to ubiquinol. Promotes maturation of the iron-sulfur protein subunit of the SDH catalytic dimer, protecting it from the deleterious effects of oxidants. May act together with SDHAF1. The sequence is that of Succinate dehydrogenase assembly factor 3, mitochondrial from Pyricularia oryzae (strain 70-15 / ATCC MYA-4617 / FGSC 8958) (Rice blast fungus).